The primary structure comprises 647 residues: Knirps-related protein (647 aa).

Residues 11-87 constitute a DNA-binding region (nuclear receptor); the sequence is NQTCKVCGEP…VGMSKSGSRY (77 aa). 2 NR C4-type zinc fingers span residues 14 to 34 and 51 to 75; these read CKVC…CEGC and CKNN…LKKC. Disordered stretches follow at residues 111–142, 196–274, 340–383, and 402–600; these read MAAH…KGMS, HKHP…LSPF, GAGQ…LLTN, and SQQQ…NSIL. The segment covering 120-134 has biased composition (gly residues); it reads AGGGSSGGSGGGQGM. 2 stretches are compositionally biased toward low complexity: residues 200–223 and 232–247; these read VVAS…VSSV and GGKS…ADGS. Residues 248–260 are compositionally biased toward gly residues; that stretch reads HSGGGGGGGGGVT. Polar residues-rich tracts occupy residues 370–381 and 420–432; these read SPSTHANNNHLL and DYSI…PNSE. 2 stretches are compositionally biased toward basic and acidic residues: residues 433-443 and 480-491; these read SGRERVKSRQN and QEERTPAGEDPR. Over residues 502 to 519 the composition is skewed to low complexity; the sequence is LSMKTTGSSLSSKSSSPE. The span at 520–541 shows a compositional bias: acidic residues; the sequence is IEPETEISSDVEKNDTDDDDED. Residues 542–556 are compositionally biased toward basic and acidic residues; that stretch reads LKVTPEEEISVRETA. Residues 567-579 are compositionally biased toward polar residues; the sequence is TTETAKTSIENTH. Positions 580 to 599 are enriched in low complexity; sequence NNNNSISNNNNNNNNNNNSI.

This sequence belongs to the nuclear hormone receptor family. NR0 subfamily.

Its subcellular location is the nucleus. This chain is Knirps-related protein (knrl), found in Drosophila melanogaster (Fruit fly).